The following is a 133-amino-acid chain: Probable nuclear transport factor 2 (133 aa).

The region spanning 10–128 (VAKAFIQHYY…YFIGNEIFRL (119 aa)) is the NTF2 domain.

Its subcellular location is the cytoplasm. Facilitates protein transport into the nucleus. Could be part of a multicomponent system of cytosolic factors that assemble at the pore complex during nuclear import. In Caenorhabditis elegans, this protein is Probable nuclear transport factor 2 (ran-4).